Here is a 459-residue protein sequence, read N- to C-terminus: Probable 3-ketoacyl-CoA synthase 14 (459 aa).

Residues 1 to 25 (MFIAMADFKLLLLILILLSLFELDL) form the signal peptide. The chain crosses the membrane as a helical span at residues 32 to 52 (FFSPFPVKIGLLLISIFFYAY). An FAE domain is found at 52-334 (YSTTRSKPVY…FILFLVKSKL (283 aa)). Residues His268, His352, His356, His385, and Asn389 contribute to the active site.

This sequence belongs to the thiolase-like superfamily. Chalcone/stilbene synthases family. In terms of tissue distribution, expressed in siliques.

Its subcellular location is the membrane. It catalyses the reaction a very-long-chain acyl-CoA + malonyl-CoA + H(+) = a very-long-chain 3-oxoacyl-CoA + CO2 + CoA. The protein operates within lipid metabolism; fatty acid biosynthesis. The polypeptide is Probable 3-ketoacyl-CoA synthase 14 (Arabidopsis thaliana (Mouse-ear cress)).